The chain runs to 1161 residues: Translation initiation factor IF-2 (1161 aa).

Positions 67 to 561 (KSSFKAANEQ…RRAMELRAAK (495 aa)) are disordered. A compositionally biased stretch (basic and acidic residues) spans 83-105 (QNKDSNSRSKPLNKEKPSKESLN). Polar residues predominate over residues 139 to 154 (SRISNLQSQVLPNSHN). Composition is skewed to basic and acidic residues over residues 164–180 (NPNEKKNSTKIVQEKKS) and 211–220 (KDIKANKKND). Composition is skewed to low complexity over residues 224 to 250 (NQRPQQANRLNNNNNFPKKNINNPRIK) and 268 to 282 (NSNRQNSNSRQPPSN). Polar residues-rich tracts occupy residues 295-311 (RQVTPNRPSNPNRQGVS), 352-362 (RQGAPNRQGSP), and 380-393 (LNRSGSKFNNQNPS). Positions 412 to 432 (ASDKEKLNRSNFEKQKVEPPK) are enriched in basic and acidic residues. The span at 440–461 (SRLNASPTAKKTPHRSFTNNSK) shows a compositional bias: polar residues. 2 stretches are compositionally biased toward basic and acidic residues: residues 464–478 (GRSDWDDSAKLEALR) and 543–561 (KETTRQRQKRRAMELRAAK). One can recognise a tr-type G domain in the interval 653–830 (KRPPVITVMG…EVEDLQANPE (178 aa)). The G1 stretch occupies residues 662–669 (GHVDHGKT). Residue 662 to 669 (GHVDHGKT) coordinates GTP. Residues 687-691 (GITQH) are G2. The segment at 712-715 (DTPG) is G3. Residues 712–716 (DTPGH) and 766–769 (NKID) each bind GTP. The G4 stretch occupies residues 766–769 (NKID). Positions 802 to 804 (SAI) are G5.

This sequence belongs to the TRAFAC class translation factor GTPase superfamily. Classic translation factor GTPase family. IF-2 subfamily.

It localises to the cytoplasm. One of the essential components for the initiation of protein synthesis. Protects formylmethionyl-tRNA from spontaneous hydrolysis and promotes its binding to the 30S ribosomal subunits. Also involved in the hydrolysis of GTP during the formation of the 70S ribosomal complex. This chain is Translation initiation factor IF-2, found in Prochlorococcus marinus (strain MIT 9515).